The sequence spans 162 residues: Small ribosomal subunit protein uS9 (162 aa).

This sequence belongs to the universal ribosomal protein uS9 family.

This Methylobacterium sp. (strain 4-46) protein is Small ribosomal subunit protein uS9.